The chain runs to 361 residues: tRNA/tmRNA (uracil-C(5))-methyltransferase (361 aa).

Residues glutamine 185, tyrosine 213, asparagine 218, glutamate 234, and aspartate 294 each coordinate S-adenosyl-L-methionine. Cysteine 319 serves as the catalytic Nucleophile. Glutamate 353 acts as the Proton acceptor in catalysis.

This sequence belongs to the class I-like SAM-binding methyltransferase superfamily. RNA M5U methyltransferase family. TrmA subfamily.

It carries out the reaction uridine(54) in tRNA + S-adenosyl-L-methionine = 5-methyluridine(54) in tRNA + S-adenosyl-L-homocysteine + H(+). The enzyme catalyses uridine(341) in tmRNA + S-adenosyl-L-methionine = 5-methyluridine(341) in tmRNA + S-adenosyl-L-homocysteine + H(+). Its function is as follows. Dual-specificity methyltransferase that catalyzes the formation of 5-methyluridine at position 54 (m5U54) in all tRNAs, and that of position 341 (m5U341) in tmRNA (transfer-mRNA). The sequence is that of tRNA/tmRNA (uracil-C(5))-methyltransferase from Pseudomonas putida (strain ATCC 700007 / DSM 6899 / JCM 31910 / BCRC 17059 / LMG 24140 / F1).